Consider the following 155-residue polypeptide: Small ribosomal subunit protein uS7cz/uS7cy (155 aa).

The protein belongs to the universal ribosomal protein uS7 family. In terms of assembly, part of the 30S ribosomal subunit.

Its subcellular location is the plastid. It localises to the chloroplast. One of the primary rRNA binding proteins, it binds directly to 16S rRNA where it nucleates assembly of the head domain of the 30S subunit. The polypeptide is Small ribosomal subunit protein uS7cz/uS7cy (rps7-A) (Phaseolus vulgaris (Kidney bean)).